Consider the following 444-residue polypeptide: Deoxyguanosinetriphosphate triphosphohydrolase-like protein (444 aa).

The HD domain maps to 66-259; sequence RLTHSLEAAQ…MELADDIAYG (194 aa).

It belongs to the dGTPase family. Type 2 subfamily.

This Vibrio campbellii (strain ATCC BAA-1116) protein is Deoxyguanosinetriphosphate triphosphohydrolase-like protein.